The following is a 365-amino-acid chain: MKKEFKLAVLPGDGIGPEIMAEAMKVLDAVEQKFQVRFERQFANVGGAAIDRDGKALPDATVEICQASDAILFGSVGGPKWDTLPAEERPERGALLPLRRIFGLFCNLRPAIVFPALTSASSLKEEVIAGGFDILVVRELTGGIYFAQPKGVEGEGGERRGFDTMAYTDAEVERITRVAFDAARKRGKKLVSIDKANVLSTSVLWREVVERVSADYPDVVLSHMYVDNAAMQLVKAPKQFDVLLCPNMFGDILSDEAAMLTGSLGMLPSASLAEGSFGMYEPAGGSAPDIAGKNIANPVAQILSAAMLLRYSCGLADAADAVEKAVENCLAAGLRTGDIYQDADGEQLVSTSAMGDAVVAELIKS.

An NAD(+)-binding site is contributed by 78-91; sequence GPKWDTLPAEERPE. Residues Arg99, Arg109, Arg138, and Asp227 each contribute to the substrate site. Mg(2+)-binding residues include Asp227, Asp251, and Asp255. An NAD(+)-binding site is contributed by 285 to 297; the sequence is GSAPDIAGKNIAN.

It belongs to the isocitrate and isopropylmalate dehydrogenases family. LeuB type 1 subfamily. In terms of assembly, homodimer. It depends on Mg(2+) as a cofactor. The cofactor is Mn(2+).

It localises to the cytoplasm. It catalyses the reaction (2R,3S)-3-isopropylmalate + NAD(+) = 4-methyl-2-oxopentanoate + CO2 + NADH. It participates in amino-acid biosynthesis; L-leucine biosynthesis; L-leucine from 3-methyl-2-oxobutanoate: step 3/4. Catalyzes the oxidation of 3-carboxy-2-hydroxy-4-methylpentanoate (3-isopropylmalate) to 3-carboxy-4-methyl-2-oxopentanoate. The product decarboxylates to 4-methyl-2 oxopentanoate. The chain is 3-isopropylmalate dehydrogenase from Syntrophotalea carbinolica (strain DSM 2380 / NBRC 103641 / GraBd1) (Pelobacter carbinolicus).